Here is an 852-residue protein sequence, read N- to C-terminus: Cell surface glycoprotein (852 aa).

An N-terminal signal peptide occupies residues 1–34 (MTDTTGKLRAVLLTALMVGSVIGAGVAFTGGAAA). N-linked (GalNAc...) (glycosaminoglycan) asparagine glycosylation is present at asparagine 36. The interval 84 to 131 (KLDNEKEVSPATLSRTGGSDEGVPLQMPIPEDQSTGSYDSNGPDNDEA) is disordered. Over residues 115 to 126 (DQSTGSYDSNGP) the composition is skewed to polar residues. Asparagine 339, asparagine 398, asparagine 438, asparagine 513, asparagine 643, asparagine 727, asparagine 751, and asparagine 787 each carry an N-linked (Glc...) asparagine glycan. Residues 772-828 (ELEEPDQTTVDQPENNQTMTTTMTETTTETTTEMTTTQENTTENGSEGTSDGESGGS) form a disordered region. Residues 785–823 (ENNQTMTTTMTETTTETTTEMTTTQENTTENGSEGTSDG) are compositionally biased toward low complexity. O-linked (Gal...) threonine glycans are attached at residues threonine 789, threonine 791, threonine 792, threonine 793, threonine 795, threonine 797, threonine 798, threonine 799, threonine 801, threonine 802, threonine 803, threonine 806, threonine 807, and threonine 808. A glycan (N-linked (Glc...) asparagine) is linked at asparagine 811. O-linked (Gal...) threonine glycosylation is found at threonine 812 and threonine 813. The N-linked (Glc...) asparagine glycan is linked to asparagine 815. The helical transmembrane segment at 829–849 (IPGFGVGVALVAVLGAALLAL) threads the bilayer. Positions 830 to 832 (PGF) match the PGF sorting signal motif.

The protein belongs to the halobacterial S-layer protein family. Post-translationally, N-linked glycan at Asn-36 consists of a glycosaminoglycan chain, constructed by a repeating sulfated pentasaccharide block composed of GlcNAc, GalNAc, Gal, GalA, 3-O-methyl-GalA, and sulfate in the molar ratio of 1:1:1:1:1:2; the other N-linked glycans contain Glc, GlcA and IdoA. O-linked glycans consist of Glc-Gal disaccharides. In terms of processing, the C-terminus (residues 770-778) is lipidated with diphytanylglyceryl phosphate. Post-translationally, cleaved by the archaeosortase ArtA at the C-terminus, with removal of a short hydrophobic segment.

It localises to the secreted. It is found in the cell wall. Its subcellular location is the S-layer. The protein resides in the cell membrane. S-layer protein. The S-layer is a paracrystalline mono-layered assembly of proteins which coat the surface of the cell. This Halobacterium salinarum (strain ATCC 29341 / DSM 671 / R1) protein is Cell surface glycoprotein (csg).